A 1026-amino-acid polypeptide reads, in one-letter code: Contactin-4 (1026 aa).

A signal peptide spans 1–18; the sequence is MRLPWELLVLQSFMLCLA. Ig-like C2-type domains are found at residues 32-117, 122-206, 225-311, 316-400, 406-493, and 497-586; these read PSHV…AKLQ, ENFK…HQVL, PKIE…GQVT, PNWV…AELS, PDFS…GNVV, and PTKV…DKLS. Cystine bridges form between C50-C100, C144-C194, C247-C295, C337-C384, C429-C477, and C519-C576. Residues N65, N90, and N191 are each glycosylated (N-linked (GlcNAc...) asparagine). N370, N375, and N466 each carry an N-linked (GlcNAc...) asparagine glycan. Fibronectin type-III domains are found at residues 599-697, 702-799, 804-899, and 900-995; these read PPEA…TEEA, TPAN…SAEE, PPAS…TRKP, and PPSQ…ISNS. The tract at residues 685-710 is disordered; that stretch reads PSRPSEKRRTEEALPEVTPANVSGGG. Residues 687–696 show a composition bias toward basic and acidic residues; it reads RPSEKRRTEE. N-linked (GlcNAc...) asparagine glycans are attached at residues N705, N764, N858, N893, N911, N929, and N954. The GPI-anchor amidated serine moiety is linked to residue S1000. The propeptide at 1001–1026 is removed in mature form; it reads GASTSNACTLSAISTIMISLTARSSL.

Belongs to the immunoglobulin superfamily. Contactin family. Interacts with PTPRG. In terms of tissue distribution, specifically expressed in the nervous system. Not expressed in heart, spleen, lung, liver, kidney or skeletal muscle. In the hippocampus, it is highly expressed in CA1 pyramidal cells and weakly expressed in other regions of the hippocampus.

Its subcellular location is the cell membrane. It localises to the secreted. Functionally, contactins mediate cell surface interactions during nervous system development. Has some neurite outgrowth-promoting activity. May be involved in synaptogenesis. The chain is Contactin-4 (Cntn4) from Rattus norvegicus (Rat).